The sequence spans 195 residues: Imidazoleglycerol-phosphate dehydratase (195 aa).

The protein belongs to the imidazoleglycerol-phosphate dehydratase family.

Its subcellular location is the cytoplasm. It catalyses the reaction D-erythro-1-(imidazol-4-yl)glycerol 3-phosphate = 3-(imidazol-4-yl)-2-oxopropyl phosphate + H2O. The protein operates within amino-acid biosynthesis; L-histidine biosynthesis; L-histidine from 5-phospho-alpha-D-ribose 1-diphosphate: step 6/9. The chain is Imidazoleglycerol-phosphate dehydratase from Jannaschia sp. (strain CCS1).